The chain runs to 254 residues: Photosystem II 22 kDa protein 2, chloroplastic (254 aa).

A chloroplast-targeting transit peptide spans 1 to 38; it reads MALQQSMAMPMMVVSDLGTAPRSSPMVQLQRMKKHLVV. 2 repeat units span residues 42 to 148 and 149 to 253. The next 4 helical transmembrane spans lie at 86-106, 120-140, 184-204, and 219-239; these read VAMLGFAASLLGEAVTGKGIL, AEPLLLFFILFTLLGAIGALG, LFVGRLAQLGIAFSLIGEIIT, and PINEIEPLLLFNILFFFFAAI.

The protein belongs to the ELIP/psbS family.

It localises to the plastid. It is found in the chloroplast thylakoid membrane. Its function is as follows. Involved in high light-mediated energy-dependent nonphotochemical quenching (NPQ, qE) and thermal dissipation (TD) thus regulating energy conversion in photosystem II and protecting from photoinhibition. Also seems to regulate quantum yield of electron transport in fluctuating light conditions. The chain is Photosystem II 22 kDa protein 2, chloroplastic from Oryza sativa subsp. japonica (Rice).